Consider the following 468-residue polypeptide: Glutamate--tRNA ligase (468 aa).

Residue 5-7 (RIA) coordinates L-glutamate. Residues 8–18 (PSPTGDPHVGT) carry the 'HIGH' region motif. Residue H15 participates in ATP binding. L-glutamate is bound by residues E41, 187-191 (YHLAN), and R205. Residues E208, L236, 243–247 (KISKR), and K246 each bind ATP. Positions 243-247 (KISKR) match the 'KMSKS' region motif. The segment at 432 to 447 (QPLRAALTGSLETPGL) is interaction with tRNA.

It belongs to the class-I aminoacyl-tRNA synthetase family. Glutamate--tRNA ligase type 1 subfamily. As to quaternary structure, monomer.

The protein resides in the cytoplasm. It catalyses the reaction tRNA(Glu) + L-glutamate + ATP = L-glutamyl-tRNA(Glu) + AMP + diphosphate. Its activity is regulated as follows. In the absence of bound tRNA, ATP is bound in a non-productive mode, and the enzyme cannot activate amino acids. Catalyzes the attachment of glutamate to tRNA(Glu) in a two-step reaction: glutamate is first activated by ATP to form Glu-AMP and then transferred to the acceptor end of tRNA(Glu). The chain is Glutamate--tRNA ligase from Thermus thermophilus (strain ATCC 27634 / DSM 579 / HB8).